The primary structure comprises 460 residues: Bifunctional protein GlmU (460 aa).

A pyrophosphorylase region spans residues Met-1–Arg-235. Residues Leu-9–Gly-12, Lys-23, Gln-76, and Gly-81–Thr-82 contribute to the UDP-N-acetyl-alpha-D-glucosamine site. Asp-109 is a Mg(2+) binding site. Residues Gly-146, Glu-161, Asn-176, and Asn-233 each coordinate UDP-N-acetyl-alpha-D-glucosamine. Residue Asn-233 coordinates Mg(2+). The segment at Val-236 to Asn-256 is linker. An N-acetyltransferase region spans residues Gly-257–Arg-460. Positions 338 and 356 each coordinate UDP-N-acetyl-alpha-D-glucosamine. The active-site Proton acceptor is His-368. Residues Tyr-371 and Asn-382 each coordinate UDP-N-acetyl-alpha-D-glucosamine. Residues Asn-391 to Tyr-392 and Ala-428 each bind acetyl-CoA.

In the N-terminal section; belongs to the N-acetylglucosamine-1-phosphate uridyltransferase family. It in the C-terminal section; belongs to the transferase hexapeptide repeat family. Homotrimer. Mg(2+) serves as cofactor.

The protein localises to the cytoplasm. It catalyses the reaction alpha-D-glucosamine 1-phosphate + acetyl-CoA = N-acetyl-alpha-D-glucosamine 1-phosphate + CoA + H(+). The enzyme catalyses N-acetyl-alpha-D-glucosamine 1-phosphate + UTP + H(+) = UDP-N-acetyl-alpha-D-glucosamine + diphosphate. The protein operates within nucleotide-sugar biosynthesis; UDP-N-acetyl-alpha-D-glucosamine biosynthesis; N-acetyl-alpha-D-glucosamine 1-phosphate from alpha-D-glucosamine 6-phosphate (route II): step 2/2. It functions in the pathway nucleotide-sugar biosynthesis; UDP-N-acetyl-alpha-D-glucosamine biosynthesis; UDP-N-acetyl-alpha-D-glucosamine from N-acetyl-alpha-D-glucosamine 1-phosphate: step 1/1. It participates in bacterial outer membrane biogenesis; LPS lipid A biosynthesis. Its function is as follows. Catalyzes the last two sequential reactions in the de novo biosynthetic pathway for UDP-N-acetylglucosamine (UDP-GlcNAc). The C-terminal domain catalyzes the transfer of acetyl group from acetyl coenzyme A to glucosamine-1-phosphate (GlcN-1-P) to produce N-acetylglucosamine-1-phosphate (GlcNAc-1-P), which is converted into UDP-GlcNAc by the transfer of uridine 5-monophosphate (from uridine 5-triphosphate), a reaction catalyzed by the N-terminal domain. This chain is Bifunctional protein GlmU, found in Bifidobacterium longum subsp. infantis (strain ATCC 15697 / DSM 20088 / JCM 1222 / NCTC 11817 / S12).